The primary structure comprises 366 residues: Mitochondrial division protein fszB (366 aa).

GTP-binding positions include 70–74 (GGGGN), 157–159 (GTG), glutamate 190, and aspartate 238.

Belongs to the FtsZ family.

It is found in the mitochondrion. In terms of biological role, probably involved in mitochondrion division process. Binds to and hydrolyzes GTP. In Dictyostelium discoideum (Social amoeba), this protein is Mitochondrial division protein fszB (fszB).